Consider the following 574-residue polypeptide: Sulfate adenylyltransferase (574 aa).

The tract at residues 1–170 (MANPPHGGVL…VEAIDRLEHY (170 aa)) is N-terminal. The tract at residues 171–395 (DYVGLRYTPA…LRESHPPRNQ (225 aa)) is catalytic. Gln198 is a sulfate binding site. Residues 198–201 (QTRN) and 292–295 (GRDH) each bind ATP. Active-site residues include Thr199, Arg200, and Asn201. Residue Arg200 coordinates sulfate. Ala296 provides a ligand contact to sulfate. Met334 is a binding site for ATP. An allosteric regulation domain; adenylyl-sulfate kinase-like region spans residues 396 to 574 (QGFTVFLTGY…LESQGLLTQL (179 aa)). 3'-phosphoadenylyl sulfate-binding positions include 435 to 438 (ETVR), Arg452, 478 to 479 (IA), and Arg516.

The protein in the N-terminal section; belongs to the sulfate adenylyltransferase family. In the C-terminal section; belongs to the APS kinase family. In terms of assembly, homohexamer. Dimer of trimers.

The protein resides in the cytoplasm. It catalyses the reaction sulfate + ATP + H(+) = adenosine 5'-phosphosulfate + diphosphate. The protein operates within sulfur metabolism; hydrogen sulfide biosynthesis; sulfite from sulfate: step 1/3. Its activity is regulated as follows. Allosterically inhibited by 3'-phosphoadenosine 5'-phosphosulfate (PAPS). Its function is as follows. Catalyzes the first intracellular reaction of sulfate assimilation, forming adenosine-5'-phosphosulfate (APS) from inorganic sulfate and ATP. Plays an important role in sulfate activation as a component of the biosynthesis pathway of sulfur-containing amino acids. The protein is Sulfate adenylyltransferase of Phaeosphaeria nodorum (strain SN15 / ATCC MYA-4574 / FGSC 10173) (Glume blotch fungus).